Reading from the N-terminus, the 413-residue chain is Serpin A12 (413 aa).

The signal sequence occupies residues 1 to 20; sequence MTRMLDLGLFLAGLLTVKGL. Residues asparagine 92 and asparagine 267 are each glycosylated (N-linked (GlcNAc...) asparagine). Residues 364–382 are reactive center loop; it reads GMEGAAGSGAQTLPMETPR.

This sequence belongs to the serpin family. Forms a stable complex with KLK7. Post-translationally, glycosylation slightly decreases affinity for heparin, but otherwise has no significant effect on KLK7 inhibitory activity or thermal stability of the protein. As to expression, expressed in visceral adipose tissues.

Its subcellular location is the secreted. Its activity is regulated as follows. Inhibition of KLK7 is enhanced by heparin. Its function is as follows. Adipokine that modulates insulin action by specifically inhibiting its target protease KLK7 in white adipose tissues. The sequence is that of Serpin A12 (Serpina12) from Mus musculus (Mouse).